A 108-amino-acid chain; its full sequence is Urease subunit beta (108 aa).

This sequence belongs to the urease beta subunit family. As to quaternary structure, heterotrimer of UreA (gamma), UreB (beta) and UreC (alpha) subunits. Three heterotrimers associate to form the active enzyme.

The protein resides in the cytoplasm. It carries out the reaction urea + 2 H2O + H(+) = hydrogencarbonate + 2 NH4(+). It functions in the pathway nitrogen metabolism; urea degradation; CO(2) and NH(3) from urea (urease route): step 1/1. This Proteus hauseri protein is Urease subunit beta.